A 371-amino-acid chain; its full sequence is 4-hydroxy-3-methylbut-2-en-1-yl diphosphate synthase (flavodoxin) (371 aa).

Residues cysteine 270, cysteine 273, cysteine 305, and glutamate 312 each coordinate [4Fe-4S] cluster.

This sequence belongs to the IspG family. [4Fe-4S] cluster is required as a cofactor.

It carries out the reaction (2E)-4-hydroxy-3-methylbut-2-enyl diphosphate + oxidized [flavodoxin] + H2O + 2 H(+) = 2-C-methyl-D-erythritol 2,4-cyclic diphosphate + reduced [flavodoxin]. Its pathway is isoprenoid biosynthesis; isopentenyl diphosphate biosynthesis via DXP pathway; isopentenyl diphosphate from 1-deoxy-D-xylulose 5-phosphate: step 5/6. Its function is as follows. Converts 2C-methyl-D-erythritol 2,4-cyclodiphosphate (ME-2,4cPP) into 1-hydroxy-2-methyl-2-(E)-butenyl 4-diphosphate. The polypeptide is 4-hydroxy-3-methylbut-2-en-1-yl diphosphate synthase (flavodoxin) (Shewanella sediminis (strain HAW-EB3)).